The primary structure comprises 425 residues: Adenylosuccinate synthetase (425 aa).

GTP is bound by residues 12 to 18 and 40 to 42; these read GDEGKGK and GHT. The Proton acceptor role is filled by Asp-13. Asp-13 and Gly-40 together coordinate Mg(2+). Residues 13–16, 38–41, Thr-127, Arg-141, Gln-222, Thr-237, and Arg-301 contribute to the IMP site; these read DEGK and NAGH. Catalysis depends on His-41, which acts as the Proton donor. Substrate is bound at residue 297–303; it reads AVTGRPR. Residues Arg-303, 329 to 331, and 411 to 413 contribute to the GTP site; these read KID and SVG.

This sequence belongs to the adenylosuccinate synthetase family. In terms of assembly, homodimer. Requires Mg(2+) as cofactor.

The protein resides in the cytoplasm. The enzyme catalyses IMP + L-aspartate + GTP = N(6)-(1,2-dicarboxyethyl)-AMP + GDP + phosphate + 2 H(+). The protein operates within purine metabolism; AMP biosynthesis via de novo pathway; AMP from IMP: step 1/2. In terms of biological role, plays an important role in the de novo pathway of purine nucleotide biosynthesis. Catalyzes the first committed step in the biosynthesis of AMP from IMP. This is Adenylosuccinate synthetase from Fusobacterium nucleatum subsp. nucleatum (strain ATCC 25586 / DSM 15643 / BCRC 10681 / CIP 101130 / JCM 8532 / KCTC 2640 / LMG 13131 / VPI 4355).